A 1342-amino-acid chain; its full sequence is DNA-directed RNA polymerase subunit beta (1342 aa).

Lys-1022 and Lys-1200 each carry N6-acetyllysine.

This sequence belongs to the RNA polymerase beta chain family. In terms of assembly, the RNAP catalytic core consists of 2 alpha, 1 beta, 1 beta' and 1 omega subunit. When a sigma factor is associated with the core the holoenzyme is formed, which can initiate transcription.

The enzyme catalyses RNA(n) + a ribonucleoside 5'-triphosphate = RNA(n+1) + diphosphate. DNA-dependent RNA polymerase catalyzes the transcription of DNA into RNA using the four ribonucleoside triphosphates as substrates. In Escherichia coli O139:H28 (strain E24377A / ETEC), this protein is DNA-directed RNA polymerase subunit beta.